A 368-amino-acid chain; its full sequence is N-acetylneuraminate epimerase (368 aa).

The first 19 residues, 1–19 (MNKTITALAIMMASFAANA), serve as a signal peptide directing secretion. 7 Kelch repeats span residues 40-84 (TVYI…AFID), 86-137 (NLYV…FVHN), 139-173 (KAYV…KINA), 174-219 (HYFD…VNKG), 222-265 (TWLI…VAGG), 287-336 (ENYQ…PWNN), and 338-367 (LLII…VTVQ). Glu228 serves as the catalytic Proton acceptor.

Belongs to the NanM family. In terms of assembly, homodimer.

It is found in the periplasm. The catalysed reaction is N-acetyl-alpha-neuraminate = N-acetyl-beta-neuraminate. In terms of biological role, converts alpha-N-acetylneuranimic acid (Neu5Ac) to the beta-anomer, accelerating the equilibrium between the alpha- and beta-anomers. Probably facilitates sialidase-negative bacteria to compete successfully for limited amounts of extracellular Neu5Ac, which is likely taken up in the beta-anomer. In addition, the rapid removal of sialic acid from solution might be advantageous to the bacterium to damp down host responses. This Escherichia coli O9:H4 (strain HS) protein is N-acetylneuraminate epimerase.